The following is a 114-amino-acid chain: Lymphotactin (114 aa).

A signal peptide spans 1–21 (MRLLLLTFLGVCCFAAWVVEG). Cys32 and Cys69 are joined by a disulfide. A disordered region spans residues 87 to 114 (RASASKSKAETIPTQAQRSASTAVTLTG). Residues 98 to 114 (IPTQAQRSASTAVTLTG) are compositionally biased toward polar residues.

This sequence belongs to the intercrine gamma family.

The protein localises to the secreted. In terms of biological role, chemotactic activity for lymphocytes but not for monocytes or neutrophils. In thymus, mediates medullary accumulation of thymic dendritic cells and contributes to regulatoy T cell development, playing a role in self-tolerance establishment. The chain is Lymphotactin (Xcl1) from Rattus norvegicus (Rat).